A 144-amino-acid polypeptide reads, in one-letter code: MLKGIHPALSPELLKTLAEMGHGDEIVLADAHFPAHSLHKNVIRADGISIDILLEAITPLFEFDAYVDAPLLMMKAVEGDSLDPNVETRYLNAIESAVGFTPNLTSLERFDFYTRAKQAYAVVVSGEIAKYGNIIIKKGVTPIL.

Catalysis depends on H22, which acts as the Proton donor. Substrate is bound by residues D30, R109, and 131–133 (YGN).

This sequence belongs to the RbsD / FucU family. FucU mutarotase subfamily. Homodecamer.

The protein resides in the cytoplasm. It carries out the reaction alpha-L-fucose = beta-L-fucose. It functions in the pathway carbohydrate metabolism; L-fucose metabolism. Involved in the anomeric conversion of L-fucose. The protein is L-fucose mutarotase of Haemophilus influenzae (strain 86-028NP).